The primary structure comprises 375 residues: Aminomethyltransferase (375 aa).

It belongs to the GcvT family. The glycine cleavage system is composed of four proteins: P, T, L and H.

The enzyme catalyses N(6)-[(R)-S(8)-aminomethyldihydrolipoyl]-L-lysyl-[protein] + (6S)-5,6,7,8-tetrahydrofolate = N(6)-[(R)-dihydrolipoyl]-L-lysyl-[protein] + (6R)-5,10-methylene-5,6,7,8-tetrahydrofolate + NH4(+). In terms of biological role, the glycine cleavage system catalyzes the degradation of glycine. The polypeptide is Aminomethyltransferase (Ralstonia nicotianae (strain ATCC BAA-1114 / GMI1000) (Ralstonia solanacearum)).